A 341-amino-acid polypeptide reads, in one-letter code: Ketol-acid reductoisomerase (NADP(+)) (341 aa).

Positions 1 to 181 (MARVYREGDI…GCARAGVLET (181 aa)) constitute a KARI N-terminal Rossmann domain. Residues 24–27 (FGSQ), serine 50, serine 52, and 82–85 (DERQ) contribute to the NADP(+) site. The active site involves histidine 107. Residue glycine 133 participates in NADP(+) binding. One can recognise a KARI C-terminal knotted domain in the interval 182 to 327 (TFAEETETDL…AELRALAAEG (146 aa)). Residues aspartate 190, glutamate 194, glutamate 226, and glutamate 230 each coordinate Mg(2+). Serine 251 contributes to the substrate binding site.

This sequence belongs to the ketol-acid reductoisomerase family. Mg(2+) serves as cofactor.

The catalysed reaction is (2R)-2,3-dihydroxy-3-methylbutanoate + NADP(+) = (2S)-2-acetolactate + NADPH + H(+). The enzyme catalyses (2R,3R)-2,3-dihydroxy-3-methylpentanoate + NADP(+) = (S)-2-ethyl-2-hydroxy-3-oxobutanoate + NADPH + H(+). It participates in amino-acid biosynthesis; L-isoleucine biosynthesis; L-isoleucine from 2-oxobutanoate: step 2/4. Its pathway is amino-acid biosynthesis; L-valine biosynthesis; L-valine from pyruvate: step 2/4. Involved in the biosynthesis of branched-chain amino acids (BCAA). Catalyzes an alkyl-migration followed by a ketol-acid reduction of (S)-2-acetolactate (S2AL) to yield (R)-2,3-dihydroxy-isovalerate. In the isomerase reaction, S2AL is rearranged via a Mg-dependent methyl migration to produce 3-hydroxy-3-methyl-2-ketobutyrate (HMKB). In the reductase reaction, this 2-ketoacid undergoes a metal-dependent reduction by NADPH to yield (R)-2,3-dihydroxy-isovalerate. This Rubrobacter xylanophilus (strain DSM 9941 / JCM 11954 / NBRC 16129 / PRD-1) protein is Ketol-acid reductoisomerase (NADP(+)).